Here is a 664-residue protein sequence, read N- to C-terminus: Fructose-1,6-bisphosphatase class 3 (664 aa).

The protein belongs to the FBPase class 3 family. The cofactor is Mn(2+).

The enzyme catalyses beta-D-fructose 1,6-bisphosphate + H2O = beta-D-fructose 6-phosphate + phosphate. Its pathway is carbohydrate biosynthesis; gluconeogenesis. The chain is Fructose-1,6-bisphosphatase class 3 from Bacteroides fragilis (strain YCH46).